Reading from the N-terminus, the 314-residue chain is Thioredoxin reductase aclD (314 aa).

Residues 13–16 (GGPA), 35–40 (DSKSYR), His-47, and Ala-112 each bind FAD. A disulfide bond links Cys-136 and Cys-139. Residues Asp-281 and 288–289 (AA) contribute to the FAD site.

This sequence belongs to the class-II pyridine nucleotide-disulfide oxidoreductase family. Homodimer. FAD serves as cofactor.

The protein operates within mycotoxin biosynthesis. In terms of biological role, thioredoxin reductase; part of the gene cluster that mediates the biosynthesis of aspirochlorine (or antibiotic A30641), an unusual halogenated spiro compound with distinctive antifungal properties due to selective inhibition of protein biosynthesis, and which is also active against bacteria, viruses, and murine tumor cells. The non-ribosomal peptide synthetase (NRPS) aclP is responsible the formation of the diketopiperazine (DKP) core from the condensation of 2 phenylalanine residues. One Phe residue is tailored into chlorotyrosine by hydroxylation and chlorination, whereas the second Phe undergoes an unprecedented C-C bond cleavage to be converted into glycine. After formation of the DKP, sulfur is incorporated into the DKP by conjugation with glutathione by aclG, followed by its stepwise degradation to the thiol by aclI, aclJ and aclK, and the dithiol oxidation by aclT. In addition, oxygenases (aclB, aclC, aclL and aclO) and O-methyltransferases (aclM and aclU) act as tailoring enzymes to produce the intermediate dechloroaspirochlorine. Ultimately, chlorination of dechloroaspirochlorine by the halogenase aclH is the last step in the aspirochlorine pathway. The polypeptide is Thioredoxin reductase aclD (Aspergillus oryzae (strain ATCC 42149 / RIB 40) (Yellow koji mold)).